Consider the following 325-residue polypeptide: MSGGLEVLSMKEDDVTKLLAAGTHLGDSNVDIQMAQYVFKTKGDGVPIINVRKTWEKLLLAARVIAAIENPADVCVLANKPFGQRAILKFAHYTGAFPIAGRFTPGTFTNQIQKAFREPRLLIVSDARSDHQPITEAAYVNIPVIAFCNTNSPLRYIDVAIPCNNMGKNSLGLMWWLLCREVLRLRGTISRELPWEVMPDLFFYRDPEEVEKEEQAKAEAERERLATDQWQTNQPAAPQQDPDQWADTMGVPSGGDWGDEPVTTAPVPTGGAPPVASTTATPATNTGSGFNQDDWSVPTTKTKDWGADDGGEWGNTEPKASTGNW.

Basic and acidic residues predominate over residues K212–A226. Residues K212–W325 are disordered. 2 stretches are compositionally biased toward low complexity: residues Q234–D247 and P261–G289. Polar residues predominate over residues F290–T300.

It belongs to the universal ribosomal protein uS2 family. Component of the small ribosomal subunit. Mature ribosomes consist of a small (40S) and a large (60S) subunit. The 40S subunit contains about 33 different proteins and 1 molecule of RNA (18S). The 60S subunit contains about 49 different proteins and 3 molecules of RNA (28S, 5.8S and 5S). Interacts with ribosomal protein S21.

The protein resides in the cytoplasm. In terms of biological role, required for the assembly and/or stability of the 40S ribosomal subunit. Required for the processing of the 20S rRNA-precursor to mature 18S rRNA in a late step of the maturation of 40S ribosomal subunits. In Suberites domuncula (Sponge), this protein is Small ribosomal subunit protein uS2.